The primary structure comprises 396 residues: Elongation factor Tu (396 aa).

The region spanning 10–206 is the tr-type G domain; the sequence is KPHVNVGTIG…ALDSYIPTPE (197 aa). The segment at 19 to 26 is G1; the sequence is GHVDHGKT. Residue 19 to 26 participates in GTP binding; that stretch reads GHVDHGKT. Position 26 (Thr26) interacts with Mg(2+). The tract at residues 60–64 is G2; sequence GITIN. The segment at 81–84 is G3; that stretch reads DCPG. GTP-binding positions include 81 to 85 and 136 to 139; these read DCPGH and NKCD. Positions 136 to 139 are G4; sequence NKCD. The segment at 174–176 is G5; sequence SAK.

It belongs to the TRAFAC class translation factor GTPase superfamily. Classic translation factor GTPase family. EF-Tu/EF-1A subfamily. Monomer.

The protein localises to the cytoplasm. It carries out the reaction GTP + H2O = GDP + phosphate + H(+). GTP hydrolase that promotes the GTP-dependent binding of aminoacyl-tRNA to the A-site of ribosomes during protein biosynthesis. This is Elongation factor Tu from Methylibium petroleiphilum (strain ATCC BAA-1232 / LMG 22953 / PM1).